We begin with the raw amino-acid sequence, 744 residues long: MTISCLLRIRPALAKSFFENGQRAFASHAAFAEHAKLERIRNIGISAHIDSGKTTLTERILFYTGRIKEMHEVKGKDNVGATMDSMELERQRGITIQSAATYTVWKDHNINIIDTPGHVDFTVEVERALRVLDGAVLVLCSVGGVQSQTLTVNRQMKRYNVPCLAFINKLDRMGANPYRVLGQMKSKLNHNAAFIQLPIGVESNCKGIVDLVKQKALYFDDQLGLTVREDEIPQDMRTECDERRHELIEQLSNVDDAIGELFLEEKTPTPQDLMGAIRRSTLKRTFTPVLVGTALKNKGVQPLLDAVLDYLPNPGEVENLAMIEKKGEEPQKVFLNPARDGKDPFVGLAFKLEAGRFGQLTYLRCYQGVLKKGDSIFNVRSGKKVRLARLVRLHSNNMEDVNEVYAGDIFALFGVDCASGDTFVTDPKLELSMESIFVPDPVVSMAIKPTNTKDRDNFSKAVARFTKEDPTFRFAYDPDVKETLVSGMGELHLEIYAQRMEREYNCPVTLGKPKVAFRETLVAPCEFDYLHKKQSGGQGQYGRVTGILEPLPPHQNTVIEFTDETIGTNVPKQFVPAIEKGFRQMAEKGLLSGHKLSGLKFRLLDGAHHIVDSSELAFMLAAQGAIKSVFENGSWQILEPVMMVEVTAPEEFQGTVIGQLNKRHGIITGTEGTEGWFTIYAEVPLNDMFGYAGELRSSTQGKGEFSMEYSRYSPCMPDVQEQLMREYQASQGIAVPDKKQKKKN.

The N-terminal 25 residues, methionine 1–phenylalanine 25, are a transit peptide targeting the mitochondrion. Residues glutamate 38–glycine 315 form the tr-type G domain. GTP is bound by residues alanine 47–threonine 54, aspartate 114–histidine 118, and asparagine 168–aspartate 171.

It belongs to the TRAFAC class translation factor GTPase superfamily. Classic translation factor GTPase family. EF-G/EF-2 subfamily.

The protein resides in the mitochondrion. It participates in protein biosynthesis; polypeptide chain elongation. Mitochondrial GTPase that catalyzes the GTP-dependent ribosomal translocation step during translation elongation. During this step, the ribosome changes from the pre-translocational (PRE) to the post-translocational (POST) state as the newly formed A-site-bound peptidyl-tRNA and P-site-bound deacylated tRNA move to the P and E sites, respectively. Catalyzes the coordinated movement of the two tRNA molecules, the mRNA and conformational changes in the ribosome. The chain is Elongation factor G, mitochondrial from Culex quinquefasciatus (Southern house mosquito).